The following is a 247-amino-acid chain: Uridylate kinase (247 aa).

18 to 21 (KLSG) lines the ATP pocket. Glycine 60 is a binding site for UMP. The ATP site is built by glycine 61 and arginine 65. UMP-binding positions include aspartate 80 and 141-148 (TGNPFFTT). ATP-binding residues include threonine 168, tyrosine 174, and aspartate 177.

The protein belongs to the UMP kinase family. Homohexamer.

It localises to the cytoplasm. The enzyme catalyses UMP + ATP = UDP + ADP. It participates in pyrimidine metabolism; CTP biosynthesis via de novo pathway; UDP from UMP (UMPK route): step 1/1. With respect to regulation, inhibited by UTP. Its function is as follows. Catalyzes the reversible phosphorylation of UMP to UDP. The protein is Uridylate kinase of Pseudomonas putida (strain ATCC 47054 / DSM 6125 / CFBP 8728 / NCIMB 11950 / KT2440).